A 185-amino-acid polypeptide reads, in one-letter code: UPF0397 protein CPR_1556 (185 aa).

The next 5 membrane-spanning stretches (helical) occupy residues 11–31, 44–64, 71–91, 111–131, and 149–169; these read IVAI…GSLP, AFLS…IGFI, IVFF…VGLI, IFMF…LVAP, and GVIG…VLIS.

It belongs to the UPF0397 family.

Its subcellular location is the cell membrane. In Clostridium perfringens (strain SM101 / Type A), this protein is UPF0397 protein CPR_1556.